We begin with the raw amino-acid sequence, 511 residues long: MITLKTIKKKYNIEQKNTKLSIGIDFGTTYSLVASALEDNIYIILDQNNRALLPSIINYTSKKPIVGWEAQKQAINDPKNTIISIKRLIGHSYDEINKLYPNLPYHLTYDKNGILSFIVQDNLINTINVSSEIFKTLKNRVNTIFNQKILGAVITVPAHFNDLQRQEIKKSAELANLNIIRLLNEPTSAAIAYGLHLNKNKIVAIYDLGGGTFDISILKLNQGIFEVLATSGNTNLGGDDFDQLLVNYIQKKTHFSYSKLDFIFQRKLLYLAKSIKIKLTSHNSVQFQFNNSKMHTITRFEFEKMIEPLILKTLNICQHVLHDSNTNLTHIEEIILVGGSTNIPIVQRKVSDFFKQLPLCTINPEQVVVAGAAIQANMLTNGSKYNNFILLDVVPLSLGIEVIGNIVEKIILKNTPLPISKTKTFTTFKDKQTTMLIHVLQGEHKLVNKCQSLCRFVLKEIPKKPAGKIIVLVNFQIDVNGLLSVTAEIKSTKIRKNITVNASIPIKKYRN.

This sequence belongs to the heat shock protein 70 family.

Chaperone involved in the maturation of iron-sulfur cluster-containing proteins. Has a low intrinsic ATPase activity which is markedly stimulated by HscB. Involved in the maturation of IscU. The sequence is that of Chaperone protein HscA (hscA) from Buchnera aphidicola subsp. Baizongia pistaciae (strain Bp).